Consider the following 175-residue polypeptide: MFHGTTILCVRRDGKVAIASDGQVSLEKTVMKNTAKKVRRLGEGQVLAGFAGSTADAFTLFERFEAKLKEHQKNMARACVELGKDWRTDRFLRRLEALLIVADKEKTFILSGAGDVIEPDYGIAAVGSGGPYAFAAARALMAHTQMSARDVVHQSLTIAGEIDIYTNANISIEEL.

The active site involves Thr-5. Residues Gly-160, Asp-163, and Thr-166 each contribute to the Na(+) site.

The protein belongs to the peptidase T1B family. HslV subfamily. As to quaternary structure, a double ring-shaped homohexamer of HslV is capped on each side by a ring-shaped HslU homohexamer. The assembly of the HslU/HslV complex is dependent on binding of ATP.

The protein localises to the cytoplasm. It carries out the reaction ATP-dependent cleavage of peptide bonds with broad specificity.. Its activity is regulated as follows. Allosterically activated by HslU binding. Functionally, protease subunit of a proteasome-like degradation complex believed to be a general protein degrading machinery. This is ATP-dependent protease subunit HslV from Myxococcus xanthus.